A 64-amino-acid polypeptide reads, in one-letter code: Sperm protamine P1 (64 aa).

The tract at residues 1-64 (MARYRHSRSR…SRRRRRRYYY (64 aa)) is disordered.

Belongs to the protamine P1 family. In terms of tissue distribution, testis.

It is found in the nucleus. Its subcellular location is the chromosome. Protamines substitute for histones in the chromatin of sperm during the haploid phase of spermatogenesis. They compact sperm DNA into a highly condensed, stable and inactive complex. This is Sperm protamine P1 (PRM1) from Hypsiprymnodon moschatus (Musky rat kangaroo).